The chain runs to 321 residues: GDP-L-fucose synthase (321 aa).

Position 14-20 (14-20 (GGSGLVG)) interacts with NADP(+). The Proton donor/acceptor role is filled by Tyr143. Residues Lys147, 170–173 (PTNV), and His186 contribute to the NADP(+) site. Residues Lys194, Trp208, Arg215, and Asp277 each coordinate substrate.

This sequence belongs to the NAD(P)-dependent epimerase/dehydratase family. Fucose synthase subfamily. In terms of assembly, homodimer.

The enzyme catalyses GDP-beta-L-fucose + NADP(+) = GDP-4-dehydro-alpha-D-rhamnose + NADPH + H(+). It participates in nucleotide-sugar biosynthesis; GDP-L-fucose biosynthesis via de novo pathway; GDP-L-fucose from GDP-alpha-D-mannose: step 2/2. Its function is as follows. Catalyzes the two-step NADP-dependent conversion of GDP-4-dehydro-6-deoxy-D-mannose to GDP-fucose, involving an epimerase and a reductase reaction. In Pongo abelii (Sumatran orangutan), this protein is GDP-L-fucose synthase (GFUS).